The primary structure comprises 111 residues: MICOS complex subunit MIC13 (111 aa).

The helical transmembrane segment at V8–Y26 threads the bilayer.

Belongs to the MICOS complex subunit Mic13 family. Component of the mitochondrial contact site and cristae organizing system (MICOS) complex.

The protein localises to the mitochondrion inner membrane. Functionally, component of the MICOS complex, a large protein complex of the mitochondrial inner membrane that plays crucial roles in the maintenance of crista junctions, inner membrane architecture, and formation of contact sites to the outer membrane. Constituent of mature MICOS complex, it is required for the formation of cristae junction (CJ) and maintenance of cristae morphology. Required for the incorporation of MIC10 into the MICOS complex. This is MICOS complex subunit MIC13 from Danio rerio (Zebrafish).